Reading from the N-terminus, the 1311-residue chain is Zinc finger protein 423 (1311 aa).

Over residues 1 to 11 the composition is skewed to basic residues; sequence MSRRKQAKPRS. 3 disordered regions span residues 1–21, 34–70, and 95–123; these read MSRR…EASD, GGLE…EDVE, and AHRC…VASP. Residues 41–54 show a composition bias toward basic and acidic residues; that stretch reads ECDRKSSRALEDRN. 2 positions are modified to phosphoserine: serine 55 and serine 58. A C2H2-type 1; degenerate zinc finger spans residues 75 to 101; the sequence is YTCDHCQQDFESLADLTDHRAHRCPGD. The segment covering 110–123 has biased composition (polar residues); sequence WVASSPSSKDVASP. 7 C2H2-type zinc fingers span residues 146 to 168, 174 to 196, 202 to 224, 230 to 252, 271 to 294, 303 to 326, and 331 to 353; these read YPCQ…EQIH, FKCT…IKLH, YHCH…LKTH, FKCS…MQAH, FMCD…LTLH, LQCI…HQAH, and HKCP…LDSH. The interval 354–426 is disordered; sequence RQPDSSNHSV…PLRGQKKMRD (73 aa). The span at 373–382 shows a compositional bias: polar residues; the sequence is ASMSSATPDS. Positions 390-404 are enriched in low complexity; sequence SVASMSSATPDSSAS. The segment at 436–460 adopts a C2H2-type 9; degenerate zinc-finger fold; it reads YSCPYCSKRDFTSLAVLEIHLKTIH. 3 C2H2-type zinc fingers span residues 468 to 491, 507 to 530, and 544 to 567; these read HTCQ…RKLH, FHCN…RVSH, and FFCN…QQAH. Residues 590–615 form a C2H2-type 13; atypical zinc finger; the sequence is YSCPYCTNSPIFGSILKLTKHIKENH. The disordered stretch occupies residues 617 to 654; the sequence is NIPLAHSKKSKAEQSPVSSDVEVSSPKRQRLSGSANSI. At serine 631 the chain carries Phosphoserine. The span at 631 to 642 shows a compositional bias: low complexity; the sequence is SPVSSDVEVSSP. C2H2-type zinc fingers lie at residues 659 to 681, 689 to 711, 719 to 742, 747 to 770, 777 to 800, 808 to 830, and 834 to 857; these read YPCN…LKLH, QACP…LTVH, YVCE…LDMH, YHCT…AVKH, YRCT…KHSH, HKCI…ITTH, and YNCR…REKH. The C2H2-type 21; degenerate zinc-finger motif lies at 913–935; that stretch reads YGCDICGAAYTMEVLLQNHRLRD. C2H2-type zinc fingers lie at residues 957-979, 986-1008, and 1047-1069; these read HKCN…LQTH, YMCP…KVTH, and FRCV…GTFH. Phosphoserine is present on serine 1081. A C2H2-type 25; degenerate zinc finger spans residues 1091-1109; it reads YKCALCLKEFRSKQDLVRL. 5 C2H2-type zinc fingers span residues 1147–1170, 1195–1217, 1225–1247, 1256–1279, and 1286–1309; these read LRCP…QVDH, YQCI…VANH, HECK…LIEH, FKCP…FAVH, and YDCS…MSQH. The span at 1163–1174 shows a compositional bias: basic and acidic residues; it reads ESHMQVDHRDLT. Residues 1163–1190 form a disordered region; it reads ESHMQVDHRDLTPETSGPRKGAQTSPVP.

Belongs to the krueppel C2H2-type zinc-finger protein family. In terms of assembly, homodimer. Interacts with PARP1, SMAD1 and SMAD4. Interacts with EBF1. Interacts with CEP290. As to expression, expressed in brain, eye, olfactory epithelium, spleen and heart. Expressed in the basal layer, consisting of neural precursor cells and immature sensory neurons of the olfactory epithelium, but not in the mature receptor cells.

Its subcellular location is the nucleus. Functionally, transcription factor that can both act as an activator or a repressor depending on the context. Plays a central role in BMP signaling and olfactory neurogenesis. Associates with SMADs in response to BMP2 leading to activate transcription of BMP target genes. Acts as a transcriptional repressor via its interaction with EBF1, a transcription factor involved in terminal olfactory receptor neurons differentiation; this interaction preventing EBF1 to bind DNA and activate olfactory-specific genes. Involved in olfactory neurogenesis by participating in a developmental switch that regulates the transition from differentiation to maturation in olfactory receptor neurons. Controls proliferation and differentiation of neural precursors in cerebellar vermis formation. The protein is Zinc finger protein 423 (Znf423) of Rattus norvegicus (Rat).